Reading from the N-terminus, the 389-residue chain is Chalcone synthase 4-2 (389 aa).

The active site involves cysteine 164.

Belongs to the thiolase-like superfamily. Chalcone/stilbene synthases family.

The catalysed reaction is (E)-4-coumaroyl-CoA + 3 malonyl-CoA + 3 H(+) = 2',4,4',6'-tetrahydroxychalcone + 3 CO2 + 4 CoA. The protein operates within secondary metabolite biosynthesis; flavonoid biosynthesis. In terms of biological role, the primary product of this enzyme is 4,2',4',6'-tetrahydroxychalcone (also termed naringenin-chalcone or chalcone) which can under specific conditions spontaneously isomerize into naringenin. The chain is Chalcone synthase 4-2 (CHS4-2) from Medicago sativa (Alfalfa).